Consider the following 725-residue polypeptide: Ribosomal RNA large subunit methyltransferase K/L (725 aa).

A THUMP domain is found at 46-157; it reads VAYRLCLWSR…RGQATLSLDL (112 aa).

Belongs to the methyltransferase superfamily. RlmKL family.

It is found in the cytoplasm. It catalyses the reaction guanosine(2445) in 23S rRNA + S-adenosyl-L-methionine = N(2)-methylguanosine(2445) in 23S rRNA + S-adenosyl-L-homocysteine + H(+). The catalysed reaction is guanosine(2069) in 23S rRNA + S-adenosyl-L-methionine = N(2)-methylguanosine(2069) in 23S rRNA + S-adenosyl-L-homocysteine + H(+). Functionally, specifically methylates the guanine in position 2445 (m2G2445) and the guanine in position 2069 (m7G2069) of 23S rRNA. The protein is Ribosomal RNA large subunit methyltransferase K/L of Pseudomonas aeruginosa (strain ATCC 15692 / DSM 22644 / CIP 104116 / JCM 14847 / LMG 12228 / 1C / PRS 101 / PAO1).